A 92-amino-acid chain; its full sequence is Tachykinin-2 (92 aa).

The N-terminal stretch at methionine 1–alanine 22 is a signal peptide. A propeptide spanning residues aspartate 23–valine 37 is cleaved from the precursor. Methionine 49 bears the Methionine amide mark. Residues serine 52–cysteine 92 constitute a propeptide that is removed on maturation. Positions glutamine 61–cysteine 92 are disordered.

Belongs to the tachykinin family. As to expression, expressed in the posterior salivary gland and more specifically in the mucus-secreting gland cells.

The protein localises to the secreted. Its function is as follows. Tachykinins are active peptides which excite neurons, evoke behavioral responses, are potent vasodilators and secretagogues, and contract (directly or indirectly) many smooth muscles. This is Tachykinin-2 from Octopus vulgaris (Common octopus).